Reading from the N-terminus, the 2179-residue chain is Voltage-dependent L-type calcium channel subunit alpha-1D (2179 aa).

3 disordered regions span residues 1–21 (MMMM…EDHA), 30–49 (TRLP…SKQT), and 64–100 (KAAQ…SSNS). Residues 1–126 (MMMMMMMKKM…RACISIVEWK (126 aa)) lie on the Cytoplasmic side of the membrane. Residues 38 to 49 (GPTSQPNSSKQT) show a composition bias toward polar residues. Over residues 82–93 (QRKRQQYAKSKK) the composition is skewed to basic residues. The stretch at 113 to 409 (NPIRRACISI…LVLGVLSGEF (297 aa)) is one I repeat. A helical membrane pass occupies residues 127–145 (PFDIFILLAIFANCVALAI). At 146 to 163 (YIPFPEDDSNSTNHNLEK) the chain is on the extracellular side. The chain crosses the membrane as a helical span at residues 164 to 183 (VEYAFLIIFTVETFLKIIAY). Residues 184–195 (GLLLHPNAYVRN) are Cytoplasmic-facing. Residues 196 to 214 (GWNLLDFVIVIVGLFSVIL) traverse the membrane as a helical segment. Residues 215–235 (EQLTKETEGGNHSSGKSGGFD) lie on the Extracellular side of the membrane. A helical membrane pass occupies residues 236-254 (VKALRAFRVLRPLRLVSGV). The Cytoplasmic segment spans residues 255–273 (PSLQVVLNSIIKAMVPLLH). The helical transmembrane segment at 274–293 (IALLVLFVIIIYAIIGLELF) threads the bilayer. The Extracellular portion of the chain corresponds to 294–381 (IGKMHKTCFF…WVNDAIGWEW (88 aa)). Glu364 lines the Ca(2+) pocket. The chain crosses the membrane as a helical span at residues 382-406 (PWVYFVSLIILGSFFVLNLVLGVLS). Residues 407–543 (GEFSKEREKA…RRCRAAVKSV (137 aa)) are Cytoplasmic-facing. The tract at residues 429-446 (QQLEEDLKGYLDWITQAE) is binding to the beta subunit. The disordered stretch occupies residues 449–480 (DPENEEEGGEEGKRNTSMPTSETESVNTENVS). Polar residues predominate over residues 463–479 (NTSMPTSETESVNTENV). The stretch at 529-775 (NRFNRRRCRA…VFLAIAVDNL (247 aa)) is one II repeat. Residues 544 to 563 (TFYWLVIVLVFLNTLTISSE) traverse the membrane as a helical segment. The Extracellular segment spans residues 564–578 (HYNQPDWLTQIQDIA). Residues 579-597 (NKVLLALFTCEMLVKMYSL) traverse the membrane as a helical segment. Residues 598 to 605 (GLQAYFVS) lie on the Cytoplasmic side of the membrane. Residues 606–624 (LFNRFDCFVVCGGITETIL) traverse the membrane as a helical segment. The Extracellular portion of the chain corresponds to 625 to 634 (VELELMSPLG). Residues 635 to 653 (VSVFRCVRLLRIFKVTRHW) form a helical membrane-spanning segment. Topologically, residues 654–672 (TSLSNLVASLLNSMKSIAS) are cytoplasmic. A helical membrane pass occupies residues 673–693 (LLLLLFLFIIIFSLLGMQLFG). The Extracellular portion of the chain corresponds to 694–747 (GKFNFDETQTKRSTFDNFPQALLTVFQILTGEDWNAVMYDGIMAYGGPSSSGMI). Ca(2+) is bound at residue Glu725. Residues 748–772 (VCIYFIILFICGNYILLNVFLAIAV) form a helical membrane-spanning segment. Residues 771 to 810 (AVDNLADAESLNTAQKEEAEEKERKKIARKESLENKKNNK) adopt a coiled-coil conformation. Residues 773-906 (DNLADAESLN…VGCHKLINHH (134 aa)) are Cytoplasmic-facing. Over residues 786-810 (KEEAEEKERKKIARKESLENKKNNK) the composition is skewed to basic and acidic residues. Residues 786–870 (KEEAEEKERK…AGPRPRRISE (85 aa)) are disordered. Residues 811 to 822 (PEVNQIANSDNK) are compositionally biased toward polar residues. Residues 845–858 (VGEEEEEEEEDEPE) are compositionally biased toward acidic residues. Residues 893 to 1175 (NPIRVGCHKL…IFVGFVIVTF (283 aa)) form an III repeat. A helical membrane pass occupies residues 907–925 (IFTNLILVFIMLSSAALAA). The Extracellular portion of the chain corresponds to 926–941 (EDPIRSHSFRNTILGY). Residues 942-961 (FDYAFTAIFTVEILLKMTTF) form a helical membrane-spanning segment. Residues 962-973 (GAFLHKGAFCRN) are Cytoplasmic-facing. A helical transmembrane segment spans residues 974–992 (YFNLLDMLVVGVSLVSFGI). The Extracellular segment spans residues 993–998 (QSSAIS). A helical membrane pass occupies residues 999 to 1018 (VVKILRVLRVLRPLRAINRA). The Cytoplasmic segment spans residues 1019–1037 (KGLKHVVQCVFVAIRTIGN). A helical membrane pass occupies residues 1038–1057 (IMIVTTLLQFMFACIGVQLF). Residues 1058-1147 (KGKFYRCTDE…VGPVYNYRVE (90 aa)) are Extracellular-facing. Positions 1095 to 1185 (RIWQNSDFNF…QEQGEKEYKN (91 aa)) are dihydropyridine binding. Residue Glu1121 participates in Ca(2+) binding. A helical transmembrane segment spans residues 1148-1168 (ISIFFIIYIIIVAFFMMNIFV). At 1169-1225 (GFVIVTFQEQGEKEYKNCELDKNQRQCVEYALKARPLRRYIPKNPYQYKFWYVVNSS) the chain is on the cytoplasmic side. One copy of the IV repeat lies at 1212–1487 (NPYQYKFWYV…LFVAVIMDNF (276 aa)). Residues 1226–1244 (PFEYMMFVLIMLNTLCLAM) form a helical membrane-spanning segment. The Extracellular portion of the chain corresponds to 1245–1259 (QHYEQSKMFNDAMDI). The chain crosses the membrane as a helical span at residues 1260–1279 (LNMVFTGVFTVEMVLKVIAF). The Cytoplasmic segment spans residues 1280–1286 (KPKGYFS). The helical transmembrane segment at 1287–1308 (DAWNTFDSLIVIGSIIDVALSE) threads the bilayer. The Extracellular segment spans residues 1309-1333 (ADPSESETIPLPTATPGNSEESNRI). The chain crosses the membrane as a helical span at residues 1334–1353 (SITFFRLFRVMRLVKLLSRG). The Cytoplasmic segment spans residues 1354 to 1372 (EGIRTLLWTFIKSFQALPY). The helical transmembrane segment at 1373–1392 (VALLIAMLFFIYAVIGMQMF) threads the bilayer. Residues 1393 to 1459 (GKVAMRDNNQ…GEEYTCGSNF (67 aa)) lie on the Extracellular side of the membrane. Residues 1440-1506 (LCDPDSDYNP…LGPHHLDEFK (67 aa)) are dihydropyridine binding. Positions 1452 to 1495 (EYTCGSNFAIVYFISFYMLCAFLIINLFVAVIMDNFDYLTRDWS) are phenylalkylamine binding. The helical transmembrane segment at 1460-1484 (AIVYFISFYMLCAFLIINLFVAVIM) threads the bilayer. At 1485-2179 (DNFDYLTRDW…ADEMICITTL (695 aa)) the chain is on the cytoplasmic side. 3 disordered regions span residues 1704–1789 (LLGN…AHGK), 1896–1941 (FERP…RSSF), and 2135–2171 (GDMG…DLAD). Polar residues predominate over residues 1764–1782 (SIGKQAPTSTNANLNNANM). Residues 2156-2171 (SDEEPDPGREEEDLAD) are compositionally biased toward acidic residues.

The protein belongs to the calcium channel alpha-1 subunit (TC 1.A.1.11) family. CACNA1D subfamily. As to quaternary structure, voltage-dependent calcium channels are multisubunit complexes, consisting of alpha-1, alpha-2, beta and delta subunits in a 1:1:1:1 ratio. The channel activity is directed by the pore-forming and voltage-sensitive alpha-1 subunit. In many cases, this subunit is sufficient to generate voltage-sensitive calcium channel activity. The auxiliary subunits beta and alpha-2/delta linked by a disulfide bridge regulate the channel activity. Interacts (via IQ domain) with CABP1 and CABP4 in a calcium independent manner. Interacts with RIMBP2. As to expression, expressed in the inner hair cells (IHC) of the cochlea.

The protein resides in the membrane. It catalyses the reaction Ca(2+)(in) = Ca(2+)(out). In terms of biological role, voltage-sensitive calcium channels (VSCC) mediate the entry of calcium ions into excitable cells and are also involved in a variety of calcium-dependent processes, including muscle contraction, hormone or neurotransmitter release, gene expression, cell motility, cell division and cell death. The isoform alpha-1D gives rise to L-type calcium currents. Long-lasting (L-type) calcium channels belong to the 'high-voltage activated' (HVA) group. They are blocked by dihydropyridines (DHP), phenylalkylamines, and by benzothiazepines. The sequence is that of Voltage-dependent L-type calcium channel subunit alpha-1D (Cacna1d) from Mus musculus (Mouse).